A 490-amino-acid polypeptide reads, in one-letter code: Betaine aldehyde dehydrogenase (490 aa).

The K(+) site is built by Ser-26, Ile-27, and Asp-93. NAD(+) is bound at residue 150-152 (GAW). Residue Lys-162 is the Charge relay system of the active site. Residues 176 to 179 (KPSE) and 230 to 233 (GVET) each bind NAD(+). Leu-246 serves as a coordination point for K(+). The Proton acceptor role is filled by Glu-252. The NAD(+) site is built by Gly-254, Cys-286, and Glu-387. Cys-286 acts as the Nucleophile in catalysis. Cys-286 carries the cysteine sulfenic acid (-SOH) modification. K(+) is bound by residues Lys-457 and Gly-460. Glu-464 acts as the Charge relay system in catalysis.

The protein belongs to the aldehyde dehydrogenase family. In terms of assembly, dimer of dimers. K(+) is required as a cofactor.

The catalysed reaction is betaine aldehyde + NAD(+) + H2O = glycine betaine + NADH + 2 H(+). Its pathway is amine and polyamine biosynthesis; betaine biosynthesis via choline pathway; betaine from betaine aldehyde: step 1/1. Its function is as follows. Involved in the biosynthesis of the osmoprotectant glycine betaine. Catalyzes the irreversible oxidation of betaine aldehyde to the corresponding acid. The chain is Betaine aldehyde dehydrogenase from Acinetobacter baumannii (strain SDF).